Reading from the N-terminus, the 91-residue chain is Small ribosomal subunit protein uS19 (91 aa).

The interval methionine 1–lysine 32 is disordered. Basic and acidic residues predominate over residues proline 9–valine 19.

Belongs to the universal ribosomal protein uS19 family.

Its function is as follows. Protein S19 forms a complex with S13 that binds strongly to the 16S ribosomal RNA. This chain is Small ribosomal subunit protein uS19, found in Acidithiobacillus ferrooxidans (strain ATCC 53993 / BNL-5-31) (Leptospirillum ferrooxidans (ATCC 53993)).